The sequence spans 393 residues: Probable N-acetyl-LL-diaminopimelate aminotransferase (393 aa).

Lys-231 carries the post-translational modification N6-(pyridoxal phosphate)lysine.

This sequence belongs to the class-I pyridoxal-phosphate-dependent aminotransferase family. As to quaternary structure, homodimer. Pyridoxal 5'-phosphate is required as a cofactor.

The protein resides in the cytoplasm. The catalysed reaction is N-acetyl-(2S,6S)-2,6-diaminopimelate + 2-oxoglutarate = L-2-acetamido-6-oxoheptanedioate + L-glutamate. It functions in the pathway amino-acid biosynthesis; L-lysine biosynthesis via DAP pathway; LL-2,6-diaminopimelate from (S)-tetrahydrodipicolinate (acetylase route): step 2/3. Its function is as follows. Essential for murein biosynthesis. Probably catalyzes the conversion of L-2-acetamido-6-oxopimelate to N-acetyl-LL-2,6-diaminopimelate. The chain is Probable N-acetyl-LL-diaminopimelate aminotransferase from Bacillus subtilis (strain 168).